A 446-amino-acid chain; its full sequence is Alpha-galacturonidase (446 aa).

NAD(+) is bound at residue 10–72 (IKIAYIGGGS…GRWRYEAVST (63 aa)). N151 is a substrate binding site. Residue C173 coordinates Mn(2+). The active-site Proton donor is H174. Position 210 (H210) interacts with Mn(2+).

This sequence belongs to the glycosyl hydrolase 4 family. Homotetramer. NAD(+) is required as a cofactor. Mn(2+) serves as cofactor.

The enzyme catalyses [(1-&gt;4)-alpha-D-galacturonosyl](n) + H2O = alpha-D-galacturonate + [(1-&gt;4)-alpha-D-galacturonosyl](n-1). In terms of biological role, alpha-galacturonidase able to catalyze the hydrolysis of the chromogenic substrate p-nitrophenyl-alpha-D-galacturonic acid (pNPalphaGalUA), and of the probable natural substrate alpha-1,4-di-galacturonate (GalUA(2)). Can neither hydrolyze pNPbetaGalUA, nor the stereoisomeric pNPalphaGlcUA. Does not display alpha- or beta-glucosidase activity as it fails to hydrolyze melibiose, raffinose, lactose and the chromogenic analogs, pNPalphaGal and pNPbetaGal. Cannot use the following compounds as substrates: pNP-N-acetyl-alpha- and beta-D-galactosaminide, pNP-N-acetyl-alpha- and beta-D-glucosaminide, pNP-alpha-L- and beta-L-arabinopyranoside, pNP-alpha- and beta-D-glucuronide, pNP-alpha- and beta-D-glucopyranoside, pNP-alpha- and beta-D-glucopyranoside 6-phosphate, pNP-alpha-D-galactopyranoside 6-phosphate and oNP-beta-D-galactopyranoside 6-phosphate. In Bacillus subtilis (strain 168), this protein is Alpha-galacturonidase (lplD).